Here is a 424-residue protein sequence, read N- to C-terminus: Elongation factor 1-alpha (424 aa).

The 219-residue stretch at 5-223 (KPHLNLITIG…DAFKVPEKPI (219 aa)) folds into the tr-type G domain. The segment at 14 to 21 (GHVDHGKS) is G1. Residue 14–21 (GHVDHGKS) participates in GTP binding. S21 contributes to the Mg(2+) binding site. The G2 stretch occupies residues 70-74 (GVTID). The interval 91–94 (DAPG) is G3. Residues 91–95 (DAPGH) and 148–151 (NKMD) each bind GTP. Residues 148 to 151 (NKMD) form a G4 region. Residues 187-189 (SGY) are G5.

It belongs to the TRAFAC class translation factor GTPase superfamily. Classic translation factor GTPase family. EF-Tu/EF-1A subfamily.

It localises to the cytoplasm. The enzyme catalyses GTP + H2O = GDP + phosphate + H(+). GTP hydrolase that promotes the GTP-dependent binding of aminoacyl-tRNA to the A-site of ribosomes during protein biosynthesis. The polypeptide is Elongation factor 1-alpha (Thermoplasma acidophilum (strain ATCC 25905 / DSM 1728 / JCM 9062 / NBRC 15155 / AMRC-C165)).